The primary structure comprises 187 residues: Benzene 1,2-dioxygenase subunit beta (187 aa).

The protein belongs to the bacterial ring-hydroxylating dioxygenase beta subunit family. This dioxygenase system consists of four proteins: the two subunits of the hydroxylase component (BedC1 and BedC2), a ferredoxin (BedB) and a ferredoxin reductase (BedA).

The catalysed reaction is benzene + NADH + O2 + H(+) = cis-1,2-dihydrobenzene-1,2-diol + NAD(+). The protein operates within aromatic compound metabolism; benzene degradation; catechol from benzene: step 1/2. In terms of biological role, the beta subunit may be responsible for the substrate specificity of the enzyme. This Pseudomonas putida (Arthrobacter siderocapsulatus) protein is Benzene 1,2-dioxygenase subunit beta (bedC2).